The following is a 351-amino-acid chain: Glycerol-1-phosphate dehydrogenase [NAD(P)+] (351 aa).

NAD(+) is bound by residues Gly-93–Asp-97 and Thr-115–Ser-118. A substrate-binding site is contributed by Asp-120. NAD(+) is bound at residue Ser-124. Asp-167 is a substrate binding site. Asp-167 and His-247 together coordinate Zn(2+). His-251 is a substrate binding site. His-263 provides a ligand contact to Zn(2+).

The protein belongs to the glycerol-1-phosphate dehydrogenase family. Zn(2+) is required as a cofactor.

The protein resides in the cytoplasm. It carries out the reaction sn-glycerol 1-phosphate + NAD(+) = dihydroxyacetone phosphate + NADH + H(+). The enzyme catalyses sn-glycerol 1-phosphate + NADP(+) = dihydroxyacetone phosphate + NADPH + H(+). It functions in the pathway membrane lipid metabolism; glycerophospholipid metabolism. In terms of biological role, catalyzes the NAD(P)H-dependent reduction of dihydroxyacetonephosphate (DHAP or glycerone phosphate) to glycerol 1-phosphate (G1P). The G1P thus generated is used as the glycerophosphate backbone of phospholipids in the cellular membranes of Archaea. The chain is Glycerol-1-phosphate dehydrogenase [NAD(P)+] from Archaeoglobus fulgidus (strain ATCC 49558 / DSM 4304 / JCM 9628 / NBRC 100126 / VC-16).